Here is a 518-residue protein sequence, read N- to C-terminus: Na(+)/H(+) exchange regulatory cofactor NHE-RF3 (518 aa).

A PDZ 1 domain is found at 9–90; it reads ECKLSKEEGQ…AVTLLVLDGN (82 aa). Phosphoserine is present on residues S108, S148, S192, S250, S334, and S348. 2 consecutive PDZ domains span residues 135–215 and 243–323; these read LCYL…VDKE and IVEM…VDKE. Residues 378 to 458 form the PDZ 4 domain; it reads LCRLDKGENG…NVTLLVCGKK (81 aa). T451 bears the Phosphothreonine mark. The tract at residues 499–518 is disordered; the sequence is KERAHSTASNSSSNSEDTEL. Phosphoserine is present on residues S507, S509, S510, S511, and S513. Positions 507–518 are enriched in low complexity; it reads SNSSSNSEDTEL.

This sequence belongs to the NHER family. As to quaternary structure, interacts with PDZK1IP1 and ABCC2. Interacts (via PDZ domains 1 and 3) with SCARB1 (C-terminal domain). Forms a heterodimeric complex with NHERF1. Interacts with AKAP2, BCR, CFTR, SLCO1A1, SLC22A12, SLC22A4, SLC22A5, NHERF2 and SLC17A1. Component of a complex, composed of PDZK1, SYNGAP1, KLHL17 and NMDA receptors. Interacts (via PDZ1 domain) directly with KLHL17; the interaction is important for integrity of actin cytoskeleton structures in neurons. Interacts (via C-terminal PDZ domain) with SLC9A3 (via C-terminal domain). Interacts (via the first PDZ domain) with PTGIR (via non-isoprenylated C-terminus). Binds to the C-terminal region of SLC26A3. Interacts (via C-terminal PDZ domain) with SLC26A6 (via C-terminal domain). Interacts (via PDZ domains 1 and 3) with SLC5A8 (via PDZ-binding motif); interaction increases nicotinate transport activity of SLC5A8. In terms of tissue distribution, highly expressed in the brush border membrane of duodenal and ileal mucosa.

The protein resides in the membrane. The protein localises to the cell membrane. A scaffold protein that connects plasma membrane proteins and regulatory components, regulating their surface expression in epithelial cells apical domains. May be involved in the coordination of a diverse range of regulatory processes for ion transport and second messenger cascades. In complex with NHERF1, may cluster proteins that are functionally dependent in a mutual fashion and modulate the trafficking and the activity of the associated membrane proteins. May play a role in the cellular mechanisms associated with multidrug resistance through its interaction with ABCC2 and PDZK1IP1. May potentiate the CFTR chloride channel activity. Required for normal cell-surface expression of SCARB1. Plays a role in maintaining normal plasma cholesterol levels via its effects on SCARB1. Plays a role in the normal localization and function of the chloride-anion exchanger SLC26A6 to the plasma membrane in the brush border of the proximal tubule of the kidney. May be involved in the regulation of proximal tubular Na(+)-dependent inorganic phosphate cotransport therefore playing an important role in tubule function. The protein is Na(+)/H(+) exchange regulatory cofactor NHE-RF3 (PDZK1) of Oryctolagus cuniculus (Rabbit).